The sequence spans 160 residues: Non-secretory ribonuclease (160 aa).

The N-terminal stretch at Met-1–Ala-27 is a signal peptide. Residue Trp-34 is glycosylated (C-linked (Man) tryptophan). His-42 functions as the Proton acceptor in the catalytic mechanism. An N-linked (GlcNAc...) asparagine glycan is attached at Asn-44. 4 cysteine pairs are disulfide-bonded: Cys-50-Cys-110, Cys-64-Cys-122, Cys-82-Cys-137, and Cys-89-Cys-98. Tyr-60 is subject to 3'-nitrotyrosine. Substrate is bound at residue Lys-65–Thr-69. N-linked (GlcNAc...) asparagine glycosylation is found at Asn-92, Asn-111, Asn-118, and Asn-138. His-155 functions as the Proton donor in the catalytic mechanism.

Belongs to the pancreatic ribonuclease family. Interacts with and forms a tight 1:1 complex with RNH1. Dimerization of two such complexes may occur.

It localises to the lysosome. The protein localises to the cytoplasmic granule. It carries out the reaction an [RNA] containing cytidine + H2O = an [RNA]-3'-cytidine-3'-phosphate + a 5'-hydroxy-ribonucleotide-3'-[RNA].. The enzyme catalyses an [RNA] containing uridine + H2O = an [RNA]-3'-uridine-3'-phosphate + a 5'-hydroxy-ribonucleotide-3'-[RNA].. This is a non-secretory ribonuclease. It is a pyrimidine specific nuclease with a slight preference for U. Cytotoxin and helminthotoxin. Possesses a wide variety of biological activities. The protein is Non-secretory ribonuclease (RNASE2) of Chlorocebus aethiops (Green monkey).